The primary structure comprises 289 residues: Diaminopimelate epimerase (289 aa).

Asn-11 and Asn-78 together coordinate substrate. Cys-87 serves as the catalytic Proton donor. Substrate contacts are provided by residues 88–89 (GN), Asn-163, Asn-199, and 217–218 (ER). The active-site Proton acceptor is the Cys-226. Substrate is bound at residue 227–228 (GT).

This sequence belongs to the diaminopimelate epimerase family. In terms of assembly, homodimer.

It localises to the cytoplasm. The catalysed reaction is (2S,6S)-2,6-diaminopimelate = meso-2,6-diaminopimelate. It functions in the pathway amino-acid biosynthesis; L-lysine biosynthesis via DAP pathway; DL-2,6-diaminopimelate from LL-2,6-diaminopimelate: step 1/1. Catalyzes the stereoinversion of LL-2,6-diaminopimelate (L,L-DAP) to meso-diaminopimelate (meso-DAP), a precursor of L-lysine and an essential component of the bacterial peptidoglycan. This is Diaminopimelate epimerase from Rhodococcus jostii (strain RHA1).